Here is a 68-residue protein sequence, read N- to C-terminus: Kasstasin (68 aa).

A signal peptide spans 1–20 (MMKKSMLLLFFLGMVSFSLA). The propeptide occupies 21–44 (DDKREDEGEEKRADEGEEKRAAEE). Positions 22-41 (DKREDEGEEKRADEGEEKRA) are disordered. Lysine 67 is modified (lysine amide).

Belongs to the frog skin active peptide (FSAP) family. Brevinin subfamily. As to expression, expressed by the skin dorsal glands.

The protein localises to the secreted. Its function is as follows. Peptide with potent vasoconstrictor properties (EC50=25 pM). Has moderate antimicrobial activity against Gram-positive bacterium S.aureus (MIC=55 uM) and against Gram-negative bacterium E.coli (MIC=110 uM). Not active against fungus C.albicans. Has weak hemolytic activity against horse erythrocytes. This is Kasstasin from Phlyctimantis maculatus (Red-legged running frog).